The primary structure comprises 438 residues: MKVLLVGGGGREHAIGEALVKGGAELYVVSNHRNPGLMRLAKDYGLAKETNVEDVIKFARKWGIELAFIGPEAPLEAGIVNALEEEGIPAVGPTREAARLETNKAWAREFMERNNIPGRKMFRIFDDVQEMRKWIDEYGKPVVVKPLGLTGGKGVKVVGYQLKDNEEAKEYAEHIIRKDGKVLIEERTDGVEFTLQVFTDGKKVIPMPLVQDYPHAYEGDVGPITGGMGSYSCSNHLLPFITEGDFERALKTLEETIEAMRKEGYPYKGILYGQFMLSGEGPVLIEYNARFGDPEAINVLAVLDDNLLEIAKGIVEGSLRKAKFLNKATVVKYIAPQGYPQDPIKGIRIEVDEEGIKNEGAKIIYAAVDENLTLLGSRALAIVGVADSLEEAERIAENGVSYVKGPIFYRKDVGTRESVEKRIEIMKKLGKEFEPNLC.

Positions 108–316 constitute an ATP-grasp domain; the sequence is REFMERNNIP…LLEIAKGIVE (209 aa). 135-194 is a binding site for ATP; sequence IDEYGKPVVVKPLGLTGGKGVKVVGYQLKDNEEAKEYAEHIIRKDGKVLIEERTDGVEFT. Mg(2+) contacts are provided by Q274, E286, and N288. 3 residues coordinate Mn(2+): Q274, E286, and N288.

It belongs to the GARS family. Mg(2+) serves as cofactor. The cofactor is Mn(2+).

It catalyses the reaction 5-phospho-beta-D-ribosylamine + glycine + ATP = N(1)-(5-phospho-beta-D-ribosyl)glycinamide + ADP + phosphate + H(+). It participates in purine metabolism; IMP biosynthesis via de novo pathway; N(1)-(5-phospho-D-ribosyl)glycinamide from 5-phospho-alpha-D-ribose 1-diphosphate: step 2/2. The chain is Phosphoribosylamine--glycine ligase from Pyrococcus horikoshii (strain ATCC 700860 / DSM 12428 / JCM 9974 / NBRC 100139 / OT-3).